Here is a 257-residue protein sequence, read N- to C-terminus: S-methyl-5'-thioadenosine phosphorylase (257 aa).

Phosphate contacts are provided by residues Ser-10 and 50-51 (RH). Met-180 is a binding site for substrate. Thr-181 contributes to the phosphate binding site. 204–206 (DYD) lines the substrate pocket.

Belongs to the PNP/MTAP phosphorylase family. MTAP subfamily. As to quaternary structure, homohexamer. Dimer of a homotrimer.

The enzyme catalyses S-methyl-5'-thioadenosine + phosphate = 5-(methylsulfanyl)-alpha-D-ribose 1-phosphate + adenine. It functions in the pathway amino-acid biosynthesis; L-methionine biosynthesis via salvage pathway; S-methyl-5-thio-alpha-D-ribose 1-phosphate from S-methyl-5'-thioadenosine (phosphorylase route): step 1/1. Its function is as follows. Catalyzes the reversible phosphorylation of S-methyl-5'-thioadenosine (MTA) to adenine and 5-methylthioribose-1-phosphate. Involved in the breakdown of MTA, a major by-product of polyamine biosynthesis. Responsible for the first step in the methionine salvage pathway after MTA has been generated from S-adenosylmethionine. Has broad substrate specificity with 6-aminopurine nucleosides as preferred substrates. The sequence is that of S-methyl-5'-thioadenosine phosphorylase (mntP) from Pyrococcus abyssi (strain GE5 / Orsay).